The chain runs to 37 residues: Large ribosomal subunit protein bL36B (37 aa).

Belongs to the bacterial ribosomal protein bL36 family.

This Kineococcus radiotolerans (strain ATCC BAA-149 / DSM 14245 / SRS30216) protein is Large ribosomal subunit protein bL36B.